The following is a 400-amino-acid chain: 8-amino-7-oxononanoate synthase (400 aa).

R21 provides a ligand contact to substrate. 112 to 113 is a pyridoxal 5'-phosphate binding site; it reads GY. H137 lines the substrate pocket. Pyridoxal 5'-phosphate is bound by residues S183, H211, and T239. K242 carries the N6-(pyridoxal phosphate)lysine modification. Residue T358 participates in substrate binding.

This sequence belongs to the class-II pyridoxal-phosphate-dependent aminotransferase family. BioF subfamily. Homodimer. Pyridoxal 5'-phosphate is required as a cofactor.

The catalysed reaction is 6-carboxyhexanoyl-[ACP] + L-alanine + H(+) = (8S)-8-amino-7-oxononanoate + holo-[ACP] + CO2. The protein operates within cofactor biosynthesis; biotin biosynthesis. Functionally, catalyzes the decarboxylative condensation of pimeloyl-[acyl-carrier protein] and L-alanine to produce 8-amino-7-oxononanoate (AON), [acyl-carrier protein], and carbon dioxide. The sequence is that of 8-amino-7-oxononanoate synthase from Burkholderia lata (strain ATCC 17760 / DSM 23089 / LMG 22485 / NCIMB 9086 / R18194 / 383).